Consider the following 467-residue polypeptide: tRNA-2-methylthio-N(6)-dimethylallyladenosine synthase (467 aa).

Residues 22–138 enclose the MTTase N-terminal domain; sequence GSYWITTFGC…LETLLNKVET (117 aa). [4Fe-4S] cluster-binding residues include Cys-31, Cys-67, Cys-101, Cys-173, Cys-177, and Cys-180. The Radical SAM core domain occupies 159–396; it reads RDSSICAWVN…NSLVEIKAKE (238 aa). Positions 399–467 constitute a TRAM domain; the sequence is VRYKDRVEEV…AFSLSGVIEN (69 aa).

It belongs to the methylthiotransferase family. MiaB subfamily. Monomer. Requires [4Fe-4S] cluster as cofactor.

The protein resides in the cytoplasm. The enzyme catalyses N(6)-dimethylallyladenosine(37) in tRNA + (sulfur carrier)-SH + AH2 + 2 S-adenosyl-L-methionine = 2-methylsulfanyl-N(6)-dimethylallyladenosine(37) in tRNA + (sulfur carrier)-H + 5'-deoxyadenosine + L-methionine + A + S-adenosyl-L-homocysteine + 2 H(+). Functionally, catalyzes the methylthiolation of N6-(dimethylallyl)adenosine (i(6)A), leading to the formation of 2-methylthio-N6-(dimethylallyl)adenosine (ms(2)i(6)A) at position 37 in tRNAs that read codons beginning with uridine. The sequence is that of tRNA-2-methylthio-N(6)-dimethylallyladenosine synthase from Prochlorococcus marinus (strain MIT 9211).